The primary structure comprises 454 residues: F-box/WD repeat-containing protein 2 (454 aa).

The region spanning 54 to 101 is the F-box domain; it reads RDFLKLLPLELSFYLLKWLDPQTLLTCCLVSKQWNKVISACTEVWQTA. 4 WD repeats span residues 146 to 183, 185 to 221, 224 to 265, and 276 to 314; these read GHSA…CVYG, QTHT…RTQH, GHTG…NTLT, and LQQC…NCKC. Lys298 carries the post-translational modification N6-acetyllysine.

As to quaternary structure, directly interacts with SKP1 and CUL1.

Functionally, substrate-recognition component of the SCF (SKP1-CUL1-F-box protein)-type E3 ubiquitin ligase complex. The sequence is that of F-box/WD repeat-containing protein 2 from Rattus norvegicus (Rat).